Here is a 146-residue protein sequence, read N- to C-terminus: Hemoglobin subunit beta (146 aa).

A Globin domain is found at 2–146 (HWTAEEKSAI…VAHALAHQYH (145 aa)). Heme b contacts are provided by H63 and H92.

It belongs to the globin family. In terms of assembly, heterotetramer of two alpha chains and two beta chains. Oxygenation results in dissociation to dimers. In terms of tissue distribution, red blood cells.

Involved in oxygen transport from the lung to the various peripheral tissues. The sequence is that of Hemoglobin subunit beta (HBB) from Erythrolamprus miliaris (South American water snake).